Reading from the N-terminus, the 197-residue chain is Imidazoleglycerol-phosphate dehydratase (197 aa).

It belongs to the imidazoleglycerol-phosphate dehydratase family.

It is found in the cytoplasm. The enzyme catalyses D-erythro-1-(imidazol-4-yl)glycerol 3-phosphate = 3-(imidazol-4-yl)-2-oxopropyl phosphate + H2O. It functions in the pathway amino-acid biosynthesis; L-histidine biosynthesis; L-histidine from 5-phospho-alpha-D-ribose 1-diphosphate: step 6/9. This is Imidazoleglycerol-phosphate dehydratase from Marinobacter nauticus (strain ATCC 700491 / DSM 11845 / VT8) (Marinobacter aquaeolei).